A 718-amino-acid polypeptide reads, in one-letter code: Catalase-peroxidase 1 (718 aa).

Positions 93–221 (WHSAGTYRIA…LAAVMMGLIY (129 aa)) form a cross-link, tryptophyl-tyrosyl-methioninium (Trp-Tyr) (with M-247). The Proton acceptor role is filled by His-94. The tryptophyl-tyrosyl-methioninium (Tyr-Met) (with W-93) cross-link spans 221-247 (YVNPEGVDGNPDPLKTAQDMRVTFARM). His-262 is a binding site for heme b.

This sequence belongs to the peroxidase family. Peroxidase/catalase subfamily. Homodimer or homotetramer. Requires heme b as cofactor. In terms of processing, formation of the three residue Trp-Tyr-Met cross-link is important for the catalase, but not the peroxidase activity of the enzyme.

The catalysed reaction is H2O2 + AH2 = A + 2 H2O. The enzyme catalyses 2 H2O2 = O2 + 2 H2O. Its function is as follows. Bifunctional enzyme with both catalase and broad-spectrum peroxidase activity. The chain is Catalase-peroxidase 1 from Shewanella amazonensis (strain ATCC BAA-1098 / SB2B).